A 637-amino-acid polypeptide reads, in one-letter code: Serine protease Hayan (637 aa).

Positions 1-26 (MAMISARRYFLLGLLVLTTSAYVTVG) are cleaved as a signal peptide. In terms of domain architecture, Clip spans 31–79 (PCQVRSDIPGICLSSSACENIRGYLKSGTLSTSQVPSCGFGAREEIICC). Intrachain disulfides connect Cys-32–Cys-78, Cys-42–Cys-68, and Cys-48–Cys-79. Disordered regions lie at residues 95-137 (FHAT…LDEN), 152-178 (KPQK…SMKM), 216-260 (QRSF…NNNN), and 286-365 (LQTT…EKER). The segment covering 125–136 (EGKRERESRLDE) has biased composition (basic and acidic residues). A compositionally biased stretch (polar residues) spans 234 to 244 (PLTTPRSRPQR). Low complexity predominate over residues 245-260 (PNNSNFNTNPSPNNNN). Residues 306 to 320 (EPYRFRGQDRDKDTQ) show a composition bias toward basic and acidic residues. Residues 321–332 (PQEPWNDVSNNL) show a composition bias toward polar residues. 4 cysteine pairs are disulfide-bonded: Cys-371/Cys-497, Cys-414/Cys-430, Cys-543/Cys-567, and Cys-578/Cys-609. Residues 385-632 (ILDGERVDRG…FLDYIEGIVW (248 aa)) form the Peptidase S1 domain. Catalysis depends on charge relay system residues His-429 and Asp-477. Ser-582 (charge relay system) is an active-site residue.

Belongs to the peptidase S1 family. CLIP subfamily.

Its subcellular location is the secreted. Functionally, serine protease which, by converting prophenoloxidase 1 (PPO1) into its active form, plays an essential role in the melanization immune response to physical or septic wounding. May function in diverse PPO1-activating cascades that are negatively controlled by different serpin proteins; Spn27A and Spn28D in the hemolymph, and Spn28D and Spn77BA in the trachea. Also required in the systematic wound response by mediating the redox-dependent activation of the JNK cytoprotective cascade in neuronal tissues after integument wounding. The sequence is that of Serine protease Hayan from Drosophila melanogaster (Fruit fly).